The sequence spans 184 residues: Photosystem I assembly protein Ycf4 (184 aa).

The next 2 membrane-spanning stretches (helical) occupy residues 19 to 39 (ISNF…LLVG) and 57 to 77 (IIFF…LFIS).

Belongs to the Ycf4 family.

The protein localises to the plastid. It is found in the chloroplast thylakoid membrane. In terms of biological role, seems to be required for the assembly of the photosystem I complex. The sequence is that of Photosystem I assembly protein Ycf4 from Cucumis sativus (Cucumber).